A 264-amino-acid polypeptide reads, in one-letter code: Gap junction beta-1 protein (264 aa).

The Cytoplasmic segment spans residues 1 to 22; it reads MNWAGLYAILSGVNRHSTSIGR. Residues 23–45 traverse the membrane as a helical segment; the sequence is IWLSVVFIFRIMVLVAAAESVWG. Over 46–75 the chain is Extracellular; it reads DEKSAFTCNTQQPGCNSVCYDHFFPISHIR. The chain crosses the membrane as a helical span at residues 76-98; the sequence is LWALQLIIVSTPALLVAMHVAHL. At 99-130 the chain is on the cytoplasmic side; it reads QHQEKKELRLSRHVKDQELAEVKKHKVKISGT. A helical transmembrane segment spans residues 131-153; sequence LWWTYISSVFFRIIFEAAFMYIF. Topologically, residues 154-191 are extracellular; it reads YLIYPGYSMIRLLKCDAYPCPNTVDCFVSRPTEKTIFT. A helical transmembrane segment spans residues 192–214; it reads VFMLVASGVCIVLNVAEVFFLIA. Over 215–264 the chain is Cytoplasmic; it reads QACTRRARRHRDSGSISKEHQQNEMNLLITGGSIIKRSAGQEKGDHCSTS.

Belongs to the connexin family. Beta-type (group I) subfamily. As to quaternary structure, a connexon is composed of a hexamer of connexins. As to expression, lung, liver, intestines, stomach and kidney.

The protein resides in the cell membrane. The protein localises to the cell junction. Its subcellular location is the gap junction. Its function is as follows. One gap junction consists of a cluster of closely packed pairs of transmembrane channels, the connexons, through which materials of low MW diffuse from one cell to a neighboring cell. This Xenopus laevis (African clawed frog) protein is Gap junction beta-1 protein (gjb1).